A 175-amino-acid chain; its full sequence is Bifunctional protein PyrR (175 aa).

Substrate contacts are provided by residues Thr40–Arg41, Asp102–Thr110, Arg135, and Val159. The PRPP-binding signature appears at Val98 to Thr110.

The protein belongs to the purine/pyrimidine phosphoribosyltransferase family. PyrR subfamily. Homodimer and homohexamer; in equilibrium.

It carries out the reaction UMP + diphosphate = 5-phospho-alpha-D-ribose 1-diphosphate + uracil. In terms of biological role, regulates transcriptional attenuation of the pyrimidine nucleotide (pyr) operon by binding in a uridine-dependent manner to specific sites on pyr mRNA. This disrupts an antiterminator hairpin in the RNA and favors formation of a downstream transcription terminator, leading to a reduced expression of downstream genes. Its function is as follows. Also displays a weak uracil phosphoribosyltransferase activity which is not physiologically significant. This Staphylococcus aureus (strain MSSA476) protein is Bifunctional protein PyrR.